A 670-amino-acid polypeptide reads, in one-letter code: Sodium/potassium/calcium exchanger 2 (670 aa).

The Cytoplasmic portion of the chain corresponds to 1 to 38 (MDLHQSATVRLLQEWCSHESPSGCRRHYNTRKKLKLIR). The helical transmembrane segment at 39–59 (VIGLVMGLVAVSTVPFSISAF) threads the bilayer. Residues 60-133 (TETYSQNNRG…DVFSLEERRK (74 aa)) lie on the Extracellular side of the membrane. Disordered stretches follow at residues 67–86 (NRGEASDVTGPRAAPGHRQR) and 91–122 (LNDKIRDYTPQPPASQEDRSENGTDHAQGDYP). The span at 106-122 (QEDRSENGTDHAQGDYP) shows a compositional bias: basic and acidic residues. Residue Asn112 is glycosylated (N-linked (GlcNAc...) asparagine). The helical transmembrane segment at 134–154 (GAIILHVIGMIYMFIALAIVC) threads the bilayer. At 155–179 (DEFFVPSLTVITEKLGISDDVAGAT) the chain is on the cytoplasmic side. The stretch at 175 to 215 (VAGATFMAAGGSAPELFTSLIGVFIAHSNVGIGTIVGSAVF) is one Alpha-1 repeat. Residues 180 to 200 (FMAAGGSAPELFTSLIGVFIA) traverse the membrane as a helical segment. The Extracellular portion of the chain corresponds to 201 to 205 (HSNVG). A helical transmembrane segment spans residues 206 to 226 (IGTIVGSAVFNILFVIGMCAL). The Cytoplasmic portion of the chain corresponds to 227–244 (FSREILNLTWWPLFRDVS). A helical transmembrane segment spans residues 245–265 (FYIVDLIMLIIFFLDNVIMWW). A topological domain (extracellular) is located at residue Glu266. The chain crosses the membrane as a helical span at residues 267-287 (SLLLLTAYFAYVVFMKFNVQV). Residues 288 to 506 (ERWVKQMINR…PDVRKPASKK (219 aa)) are Cytoplasmic-facing. Positions 312–335 (ASTAGDKEEPTLPNKPRLQRGGSS) are disordered. Phosphoserine is present on residues Ser337 and Ser341. Disordered regions lie at residues 394–414 (KCQVDENERQNGAANHVDYAA) and 450–471 (AADAPQATETAEEDDDQPLSLS). Residues 507-527 (FFPITFFGSITWIAVFSYLMV) traverse the membrane as a helical segment. Residues 528–542 (WWAHQVGETIGISEE) are Extracellular-facing. A helical transmembrane segment spans residues 543–563 (IMGLTILAAGTSIPDLITSVI). Residues 550–581 (AAGTSIPDLITSVIVARKGLGDMAVSSSVGSN) form an Alpha-2 repeat. Topologically, residues 564-578 (VARKGLGDMAVSSSV) are cytoplasmic. Residues 579–599 (GSNIFDITVGLPLPWLLYTII) traverse the membrane as a helical segment. Over 600-611 (HRFKPVTVSSNG) the chain is Extracellular. Residues 612–632 (LFCAIVLLFIMLIFVILSIAL) traverse the membrane as a helical segment. At 633-639 (CKWRMNK) the chain is on the cytoplasmic side. Residues 640 to 660 (ILGFIMFGLYFAFLVVSVLLE) form a helical membrane-spanning segment. Over 661–670 (DKVLECPVSI) the chain is Extracellular.

This sequence belongs to the Ca(2+):cation antiporter (CaCA) (TC 2.A.19) family. SLC24A subfamily. As to expression, expressed abundantly in all regions of the brain and weakly in the eye, large intestine and adrenal tissue.

The protein localises to the cell membrane. The catalysed reaction is Ca(2+)(out) + K(+)(out) + 4 Na(+)(in) = Ca(2+)(in) + K(+)(in) + 4 Na(+)(out). Calcium, potassium:sodium antiporter that transports 1 Ca(2+) and 1 K(+) in exchange for 4 Na(+). Required for learming and memory by regulating neuronal Ca(2+), which is essential for the development of synaptic plasticity. The sequence is that of Sodium/potassium/calcium exchanger 2 (Slc24a2) from Rattus norvegicus (Rat).